Consider the following 263-residue polypeptide: Urease accessory protein UreD 1 (263 aa).

The protein belongs to the UreD family. UreD, UreF and UreG form a complex that acts as a GTP-hydrolysis-dependent molecular chaperone, activating the urease apoprotein by helping to assemble the nickel containing metallocenter of UreC. The UreE protein probably delivers the nickel.

Its subcellular location is the cytoplasm. Functionally, required for maturation of urease via the functional incorporation of the urease nickel metallocenter. This chain is Urease accessory protein UreD 1, found in Synechococcus sp. (strain JA-3-3Ab) (Cyanobacteria bacterium Yellowstone A-Prime).